The following is a 503-amino-acid chain: Protein phosphatase eya-1 (503 aa).

The active-site Nucleophile is Asp237. Residues Asp237 and Asp239 each coordinate Mg(2+). Residue Asp239 is the Proton donor of the active site.

This sequence belongs to the HAD-like hydrolase superfamily. EYA family. Interacts (via C-terminus) with ceh-34 (via N-terminus). Mg(2+) is required as a cofactor. In terms of tissue distribution, expressed in body wall muscles. Expressed in BAG sensory neurons and in other head neurons.

It localises to the nucleus. It carries out the reaction O-phospho-L-tyrosyl-[protein] + H2O = L-tyrosyl-[protein] + phosphate. Its function is as follows. Tyrosine protein phosphatase. Acts probably as a transcription regulator in the embryonic and postembryonic development of several tissues including pharynx, vulva and gonads. Required for the development of anterior tissues during late embryogenesis. Together with ceh-34, required to specify the coelomocyte fate in embryonic and postembryonic precursors. In the anterior part of the embryo, prevents apoptosis in cells that are not fated to die. Together with ceh-34 activates proapoptotic factor egl-1 expression to promote motor neuron M4 sister cell apoptosis. Also promotes apoptosis of I1 pharyngeal neuron sister cell. Plays a role in locomotion and fertility. May play a role in resistance to heat and oxidative stresses. May cooperate with the transcription factors vab-3 and ceh-32 to repress transcription factor ets-5 expression in non BAG neuronal cells. The sequence is that of Protein phosphatase eya-1 from Caenorhabditis elegans.